A 236-amino-acid chain; its full sequence is 2-C-methyl-D-erythritol 4-phosphate cytidylyltransferase (236 aa).

It belongs to the IspD/TarI cytidylyltransferase family. IspD subfamily.

It carries out the reaction 2-C-methyl-D-erythritol 4-phosphate + CTP + H(+) = 4-CDP-2-C-methyl-D-erythritol + diphosphate. The protein operates within isoprenoid biosynthesis; isopentenyl diphosphate biosynthesis via DXP pathway; isopentenyl diphosphate from 1-deoxy-D-xylulose 5-phosphate: step 2/6. In terms of biological role, catalyzes the formation of 4-diphosphocytidyl-2-C-methyl-D-erythritol from CTP and 2-C-methyl-D-erythritol 4-phosphate (MEP). The chain is 2-C-methyl-D-erythritol 4-phosphate cytidylyltransferase from Paraburkholderia phymatum (strain DSM 17167 / CIP 108236 / LMG 21445 / STM815) (Burkholderia phymatum).